Here is a 488-residue protein sequence, read N- to C-terminus: Adenylosuccinate synthetase 1, chloroplastic (488 aa).

Residues 1-47 (MSLSTVNHAAAAAAAAAGPGKSFSAAAPAAPSVRLPRTRAPAAAAVS) constitute a chloroplast transit peptide. Residues 75-81 (GDEGKGK) and 103-105 (GHT) contribute to the GTP site. The active-site Proton acceptor is D76. Residues D76 and G103 each contribute to the Mg(2+) site. Residues 76 to 79 (DEGK), 101 to 104 (NAGH), T193, R207, Q287, T302, and R366 each bind IMP. Residue H104 is the Proton donor of the active site. 362 to 368 (TTTGRPR) provides a ligand contact to substrate. GTP is bound by residues R368, 394 to 396 (KLD), and 477 to 479 (GVG).

Belongs to the adenylosuccinate synthetase family. As to quaternary structure, homodimer. The cofactor is Mg(2+).

The protein localises to the plastid. It localises to the chloroplast. It catalyses the reaction IMP + L-aspartate + GTP = N(6)-(1,2-dicarboxyethyl)-AMP + GDP + phosphate + 2 H(+). The protein operates within purine metabolism; AMP biosynthesis via de novo pathway; AMP from IMP: step 1/2. Plays an important role in the de novo pathway and in the salvage pathway of purine nucleotide biosynthesis. Catalyzes the first committed step in the biosynthesis of AMP from IMP. The polypeptide is Adenylosuccinate synthetase 1, chloroplastic (Oryza sativa subsp. japonica (Rice)).